Reading from the N-terminus, the 405-residue chain is Accessory Sec system protein translocase subunit SecY2 (405 aa).

10 helical membrane passes run 14–34, 65–85, 104–124, 131–151, 156–176, 191–211, 247–267, 285–305, 343–363, and 368–388; these read LFTSFLLFIYVLGSRIILPFV, IFSVGLSPWMSAMILWQMFSF, MYLTLLIAVIQSLAVSLRLPV, ILVVLMNTILLIAGTFFLVWL, ASMGIGGSIVILLSSMVLNIP, GIIVLLALLTLVFSYLLALMY, MYVMSFLSVPAYLFILLGFIF, PLWVYVYISVLFLFSIIFAFV, FSVIGGLFNVIMAGGPMLFVL, and LLRLAMIPGLFMMFGGMIFTI.

The protein belongs to the SecY/SEC61-alpha family. SecY2 subfamily. In terms of assembly, component of the accessory SecA2/SecY2 protein translocase complex required to export cell wall proteins. May form heterotrimers with SecE and SecG subunits.

Its subcellular location is the cell membrane. Functionally, part of the accessory SecA2/SecY2 system specifically required for export of possible cell wall proteins. The central subunit of a protein translocation channel. The protein is Accessory Sec system protein translocase subunit SecY2 of Streptococcus pneumoniae serotype 4 (strain ATCC BAA-334 / TIGR4).